The following is a 663-amino-acid chain: UvrABC system protein B (663 aa).

Basic and acidic residues predominate over residues 1-10 (MIDKRDDKPF). Positions 1-23 (MIDKRDDKPFKLKSKYKPSGDQP) are disordered. One can recognise a Helicase ATP-binding domain in the interval 31–271 (DNIEGGEKAQ…EQSIAKIQAE (241 aa)). 44-51 (GATGTGKT) is a binding site for ATP. The Beta-hairpin signature appears at 97–120 (YYDYYQPEAYVPSSDTYIEKDSSV). Residues 435-601 (QIDDLLGEIN…TIKKDIRGLI (167 aa)) form the Helicase C-terminal domain. A UVR domain is found at 627 to 662 (KEAINALQKQMQEAAELLDFELAAQMRDLILELKLM).

This sequence belongs to the UvrB family. In terms of assembly, forms a heterotetramer with UvrA during the search for lesions. Interacts with UvrC in an incision complex.

The protein localises to the cytoplasm. Its function is as follows. The UvrABC repair system catalyzes the recognition and processing of DNA lesions. A damage recognition complex composed of 2 UvrA and 2 UvrB subunits scans DNA for abnormalities. Upon binding of the UvrA(2)B(2) complex to a putative damaged site, the DNA wraps around one UvrB monomer. DNA wrap is dependent on ATP binding by UvrB and probably causes local melting of the DNA helix, facilitating insertion of UvrB beta-hairpin between the DNA strands. Then UvrB probes one DNA strand for the presence of a lesion. If a lesion is found the UvrA subunits dissociate and the UvrB-DNA preincision complex is formed. This complex is subsequently bound by UvrC and the second UvrB is released. If no lesion is found, the DNA wraps around the other UvrB subunit that will check the other stand for damage. This Streptococcus pyogenes serotype M5 (strain Manfredo) protein is UvrABC system protein B.